We begin with the raw amino-acid sequence, 287 residues long: Phospholipase A and acyltransferase 5 (287 aa).

Disordered stretches follow at residues 48–72 (PKQI…ASSQ) and 86–138 (DRGL…SNQK). Composition is skewed to polar residues over residues 49 to 72 (KQIS…ASSQ) and 128 to 138 (LKNQAAESNQK). The 114-residue stretch at 144 to 257 (LIEIFRIGYE…LRYGVPRSQQ (114 aa)) folds into the LRAT domain. Catalysis depends on residues histidine 154 and histidine 166. Cysteine 241 functions as the Acyl-thioester intermediate in the catalytic mechanism.

The protein belongs to the H-rev107 family. Expressed in testis.

It localises to the cytoplasm. It is found in the cytosol. It catalyses the reaction a 1,2-diacyl-sn-glycero-3-phosphocholine + H2O = a 1-acyl-sn-glycero-3-phosphocholine + a fatty acid + H(+). The enzyme catalyses a 1,2-diacyl-sn-glycero-3-phosphocholine + H2O = a 2-acyl-sn-glycero-3-phosphocholine + a fatty acid + H(+). The catalysed reaction is 1-hexadecanoyl-2-(5Z,8Z,11Z,14Z-eicosatetraenoyl)-sn-glycero-3-phosphocholine + 1,2-di-(9Z-octadecenoyl)-sn-glycero-3-phosphoethanolamine = N-(5Z,8Z,11Z,14Z-eicosatetraenoyl)-1,2-di-(9Z-octadecenoyl)-sn-glycero-3-phosphoethanolamine + 1-hexadecanoyl-sn-glycero-3-phosphocholine + H(+). It carries out the reaction 1,2-di-(9Z-octadecenoyl)-sn-glycero-3-phosphoethanolamine + 1,2-dihexadecanoyl-sn-glycero-3-phosphocholine = N-hexadecanoyl-1,2-di-(9Z-octadecenoyl)-sn-glycero-3-phosphoethanolamine + 1-hexadecanoyl-sn-glycero-3-phosphocholine + H(+). It catalyses the reaction 1,2-di-(9Z-octadecenoyl)-sn-glycero-3-phosphoethanolamine + 1,2-dihexadecanoyl-sn-glycero-3-phosphocholine = N-hexadecanoyl-1,2-di-(9Z-octadecenoyl)-sn-glycero-3-phosphoethanolamine + 2-hexadecanoyl-sn-glycero-3-phosphocholine + H(+). The enzyme catalyses a 1,2-diacyl-sn-glycero-3-phosphoethanolamine + a 1,2-diacyl-sn-glycero-3-phosphocholine = an N-acyl-1,2-diacyl-sn-glycero-3-phosphoethanolamine + a 1-acyl-sn-glycero-3-phosphocholine + H(+). The catalysed reaction is a 1,2-diacyl-sn-glycero-3-phosphoethanolamine + a 1,2-diacyl-sn-glycero-3-phosphocholine = an N-acyl-1,2-diacyl-sn-glycero-3-phosphoethanolamine + a 2-acyl-sn-glycero-3-phosphocholine + H(+). It carries out the reaction 1-hexadecanoyl-2-(9Z-octadecenoyl)-sn-glycero-3-phosphocholine + 1,2-di-(9Z-octadecenoyl)-sn-glycero-3-phosphoethanolamine = N,1,2-tri-(9Z-octadecenoyl)-sn-glycero-3-phosphoethanolamine + 1-hexadecanoyl-sn-glycero-3-phosphocholine + H(+). Exhibits both phospholipase A1/2 and acyltransferase activities. Shows phospholipase A1 (PLA1) and A2 (PLA2) activity, catalyzing the calcium-independent release of fatty acids from the sn-1 or sn-2 position of glycerophospholipids. Shows N-acyltransferase activity, catalyzing the calcium-independent transfer of a fatty acyl group at the sn-1 position of phosphatidylcholine (PC) and other glycerophospholipids to the primary amine of phosphatidylethanolamine (PE), forming N-acylphosphatidylethanolamine (NAPE), which serves as precursor for N-acylethanolamines (NAEs). The chain is Phospholipase A and acyltransferase 5 from Rattus norvegicus (Rat).